A 449-amino-acid polypeptide reads, in one-letter code: MRECISIHVGQAGVQIGNACWELYCLEHGIQPDGQMPSDKTIGGGDDSFNTFFSETGAGKHVPRAVFVDLEPTVIDEVRTGTYRQLFHPEQLITGKEDAANNYARGHYTIGKEIIDLVLDRIRKLADQCTGLQGFLVFHSFGGGTGSGFTSLLMERLSVDYGKKSKLEFSIYPAPQVSTAVVEPYNSILTTHTTLEHSDCAFMVDNEAIYDICRRNLDIERPTYTNLNRLISQIVSSITASLRFDGALNVDLTEFQTNLVPYPRIHFPLATYAPVISAEKAYHEQLTVAEITNACFEPANQMVKCDPRHGKYMACCLLYRGDVVPKDVNAAIATIKTKRTIQFVDWCPTGFKVGINYQPPTVVPGGDLAKVQRAVCMLSNTTAIAEAWARLDHKFDLMYAKRAFVHWYVGEGMEEGEFSEAREDMAALEKDYEEVGADSAEGDDEGEEY.

Positions 1–4 match the MREC motif motif; that stretch reads MREC. Position 11 (Gln-11) interacts with GTP. Lys-40 carries the post-translational modification N6-acetyllysine. Positions 71, 140, 144, 145, 179, 206, and 228 each coordinate GTP. Glu-71 serves as a coordination point for Mg(2+). Glu-254 is a catalytic residue. At Tyr-282 the chain carries 3'-nitrotyrosine. Tyr-432 is subject to Phosphotyrosine. Ser-439 is modified (phosphoserine). Tyr-449 carries the 3'-nitrotyrosine modification.

It belongs to the tubulin family. In terms of assembly, dimer of alpha and beta chains. A typical microtubule is a hollow water-filled tube with an outer diameter of 25 nm and an inner diameter of 15 nM. Alpha-beta heterodimers associate head-to-tail to form protofilaments running lengthwise along the microtubule wall with the beta-tubulin subunit facing the microtubule plus end conferring a structural polarity. Microtubules usually have 13 protofilaments but different protofilament numbers can be found in some organisms and specialized cells. The cofactor is Mg(2+). Post-translationally, some glutamate residues at the C-terminus are polyglycylated, resulting in polyglycine chains on the gamma-carboxyl group. Glycylation is mainly limited to tubulin incorporated into axonemes (cilia and flagella) whereas glutamylation is prevalent in neuronal cells, centrioles, axonemes, and the mitotic spindle. Both modifications can coexist on the same protein on adjacent residues, and lowering polyglycylation levels increases polyglutamylation, and reciprocally. Cilia and flagella glycylation is required for their stability and maintenance. Flagella glycylation controls sperm motility. In terms of processing, some glutamate residues at the C-terminus are polyglutamylated, resulting in polyglutamate chains on the gamma-carboxyl group. Polyglutamylation plays a key role in microtubule severing by spastin (SPAST). SPAST preferentially recognizes and acts on microtubules decorated with short polyglutamate tails: severing activity by SPAST increases as the number of glutamates per tubulin rises from one to eight, but decreases beyond this glutamylation threshold. Glutamylation is also involved in cilia motility. Acetylation of alpha chains at Lys-40 is located inside the microtubule lumen. This modification has been correlated with increased microtubule stability, intracellular transport and ciliary assembly. Post-translationally, methylation of alpha chains at Lys-40 is found in mitotic microtubules and is required for normal mitosis and cytokinesis contributing to genomic stability. In terms of processing, nitration of Tyr-449 is irreversible and interferes with normal dynein intracellular distribution. Undergoes a tyrosination/detyrosination cycle, the cyclic removal and re-addition of a C-terminal tyrosine residue by the enzymes tubulin tyrosine carboxypeptidase (MATCAP1, VASH1 or VASH2) and tubulin tyrosine ligase (TTL), respectively. Post-translationally, tyrosination promotes microtubule interaction with CAP-Gly domain-containing proteins such as CLIP1, CLIP2 and DCTN1. Tyrosination regulates the initiation of dynein-dynactin motility via interaction with DCTN1, which brings the dynein-dynactin complex into contact with microtubules. In neurons, tyrosinated tubulins mediate the initiation of retrograde vesicle transport. In terms of processing, detyrosination is involved in metaphase plate congression by guiding chromosomes during mitosis: detyrosination promotes interaction with CENPE, promoting pole-proximal transport of chromosomes toward the equator. Detyrosination increases microtubules-dependent mechanotransduction in dystrophic cardiac and skeletal muscle. In cardiomyocytes, detyrosinated microtubules are required to resist to contractile compression during contraction: detyrosination promotes association with desmin (DES) at force-generating sarcomeres, leading to buckled microtubules and mechanical resistance to contraction. As to expression, minor alpha-tubulin expressed in all tissues.

The protein localises to the cytoplasm. It is found in the cytoskeleton. The catalysed reaction is GTP + H2O = GDP + phosphate + H(+). Its function is as follows. Tubulin is the major constituent of microtubules, a cylinder consisting of laterally associated linear protofilaments composed of alpha- and beta-tubulin heterodimers. Microtubules grow by the addition of GTP-tubulin dimers to the microtubule end, where a stabilizing cap forms. Below the cap, tubulin dimers are in GDP-bound state, owing to GTPase activity of alpha-tubulin. The sequence is that of Tubulin alpha-1C chain (Tuba1c) from Mus musculus (Mouse).